Reading from the N-terminus, the 156-residue chain is ATP synthase subunit b 2 (156 aa).

A helical membrane pass occupies residues 11-31 (LLAFIFFVWFCMKFVWPPIMG).

It belongs to the ATPase B chain family. In terms of assembly, F-type ATPases have 2 components, F(1) - the catalytic core - and F(0) - the membrane proton channel. F(1) has five subunits: alpha(3), beta(3), gamma(1), delta(1), epsilon(1). F(0) has three main subunits: a(1), b(2) and c(10-14). The alpha and beta chains form an alternating ring which encloses part of the gamma chain. F(1) is attached to F(0) by a central stalk formed by the gamma and epsilon chains, while a peripheral stalk is formed by the delta and b chains.

It localises to the cell inner membrane. Functionally, f(1)F(0) ATP synthase produces ATP from ADP in the presence of a proton or sodium gradient. F-type ATPases consist of two structural domains, F(1) containing the extramembraneous catalytic core and F(0) containing the membrane proton channel, linked together by a central stalk and a peripheral stalk. During catalysis, ATP synthesis in the catalytic domain of F(1) is coupled via a rotary mechanism of the central stalk subunits to proton translocation. Component of the F(0) channel, it forms part of the peripheral stalk, linking F(1) to F(0). The protein is ATP synthase subunit b 2 of Pseudoalteromonas atlantica (strain T6c / ATCC BAA-1087).